Consider the following 152-residue polypeptide: UPF0266 membrane protein CKO_01158 (152 aa).

A run of 3 helical transmembrane segments spans residues 6–26 (LVLV…QFIM), 45–65 (VDSV…VTSH), and 67–87 (AQIT…IFWV).

This sequence belongs to the UPF0266 family.

The protein resides in the cell inner membrane. The sequence is that of UPF0266 membrane protein CKO_01158 from Citrobacter koseri (strain ATCC BAA-895 / CDC 4225-83 / SGSC4696).